A 135-amino-acid chain; its full sequence is ATP synthase epsilon chain (135 aa).

Belongs to the ATPase epsilon chain family. As to quaternary structure, F-type ATPases have 2 components, CF(1) - the catalytic core - and CF(0) - the membrane proton channel. CF(1) has five subunits: alpha(3), beta(3), gamma(1), delta(1), epsilon(1). CF(0) has three main subunits: a, b and c.

It localises to the cell inner membrane. Produces ATP from ADP in the presence of a proton gradient across the membrane. The protein is ATP synthase epsilon chain of Rhizobium johnstonii (strain DSM 114642 / LMG 32736 / 3841) (Rhizobium leguminosarum bv. viciae).